The primary structure comprises 195 residues: Translation initiation factor IF-3 (195 aa).

The interval 158-195 is disordered; that stretch reads EQSEVQQRPKREGRNMIMFLSPRKTPLIKKEEDAKENN. Residues 185–195 are compositionally biased toward basic and acidic residues; the sequence is IKKEEDAKENN.

The protein belongs to the IF-3 family. Monomer.

It is found in the cytoplasm. Its function is as follows. IF-3 binds to the 30S ribosomal subunit and shifts the equilibrium between 70S ribosomes and their 50S and 30S subunits in favor of the free subunits, thus enhancing the availability of 30S subunits on which protein synthesis initiation begins. The protein is Translation initiation factor IF-3 of Prochlorococcus marinus (strain MIT 9515).